A 770-amino-acid chain; its full sequence is Shutoff protein (770 aa).

Disordered stretches follow at residues 1–20 and 30–49; these read MEEDLKLQPDSETLTTPNSE and EEENEQVEQDPGYVTPPEDG. Residues 10-19 show a composition bias toward polar residues; sequence DSETLTTPNS. Positions 248–312 are binding to host EIF4G; that stretch reads VMDQVLIKRA…AVLVTVELEC (65 aa). The RRM domain occupies 315–433; it reads RFFANPQTLR…ELWTSFDERT (119 aa). 2 positions are modified to phosphotyrosine; by host: Tyr332 and Tyr647. The segment at 661-770 is disordered; it reads LSAAASCRSQ…TATMFTESQP (110 aa). The segment covering 726 to 739 has biased composition (basic residues); sequence GGPRGRGGRNHRQR. The segment covering 742 to 755 has biased composition (polar residues); that stretch reads TIFQKTRSEPTSEN.

It belongs to the adenoviridae shutoff protein family. Monomer. Interacts with hexon protein; this interaction allows chaperoning and trimerization of hexon proteins. Interacts (via N-terminus) with host initiation factor EIF4G (via C-terminus). Interacts (via RRM domain) with viral mRNAs that contain the tripartite leader; this interaction allows ribosome shunting and expression of viral late mRNAs. Post-translationally, might be cleaved by the viral protease. Phosphorylated. Tyrosine phosphorylation enhances preferential binding to tripartite leader mRNAs and allows ribosome shunting. In terms of processing, methylated. Asymmetric dimethylation by host PRMT1 of the Arg/Gly-rich region may regulate shutoff protein binding to hexon and promote the capsid assembly in the nucleus.

The protein localises to the host cytoplasm. Protein that inhibits host translation while promoting late viral translation by ribosome shunting. Blocks host cap-dependent translation by binding to eIF4G, displacing MKNK1 from cap initiation complexes and preventing EIF4E phosphorylation. Binds to the tripartite leader sequence of viral late mRNAs and recruits host eIF4G, PABPC1/poly-A binding protein and 40S ribosomes subunits on viral mRNAs, allowing ribosome shunting and efficient translation of late viral mRNAs even though conventional translation via ribosome scanning from the cap has been shut off in the host cell. During assembly, acts as a chaperone protein that helps hexon proteins assembly into trimers. The chain is Shutoff protein from Human adenovirus F serotype 40 (HAdV-40).